Here is a 101-residue protein sequence, read N- to C-terminus: Large ribosomal subunit protein eL21 (101 aa).

Residues 1–18 show a composition bias toward basic residues; it reads MVKHSKGYRTRSRSLLRK. The interval 1–24 is disordered; the sequence is MVKHSKGYRTRSRSLLRKSPRERG.

It belongs to the eukaryotic ribosomal protein eL21 family.

This chain is Large ribosomal subunit protein eL21 (rpl21e), found in Saccharolobus solfataricus (strain ATCC 35092 / DSM 1617 / JCM 11322 / P2) (Sulfolobus solfataricus).